Consider the following 422-residue polypeptide: Probable tRNA pseudouridine synthase D (422 aa).

The Nucleophile role is filled by D83. A TRUD domain is found at 164 to 386 (GFPNYFGSQR…AGGRRELLIK (223 aa)).

It belongs to the pseudouridine synthase TruD family.

The catalysed reaction is uridine(13) in tRNA = pseudouridine(13) in tRNA. Functionally, could be responsible for synthesis of pseudouridine from uracil-13 in transfer RNAs. The polypeptide is Probable tRNA pseudouridine synthase D (Thermococcus sibiricus (strain DSM 12597 / MM 739)).